The chain runs to 904 residues: Toll-like receptor 3 (904 aa).

Residues 1–26 form the signal peptide; that stretch reads MSRPLPYHIYFFTGLLTCWILCTSSA. The 26-residue stretch at 27–52 folds into the LRRNT domain; that stretch reads HKCTVRHEVADCSHLKLTQIPEDLPT. The Lumenal segment spans residues 27 to 705; the sequence is HKCTVRHEVA…PCKDSAPFEL (679 aa). A disulfide bridge connects residues Cys-29 and Cys-38. N-linked (GlcNAc...) asparagine glycosylation is found at Asn-53, Asn-58, and Asn-71. LRR repeat units follow at residues 53–74, 77–98, 101–122, 125–146, 149–170, and 173–196; these read NITV…NFTR, RLTI…LCQN, WLEI…TFVF, NLTE…PFKN, NLIK…TQLQ, and NLQE…DFLG. Cys-96 and Cys-123 form a disulfide bridge. N-linked (GlcNAc...) asparagine glycosylation is present at Asn-125. A glycan (N-linked (GlcNAc...) asparagine) is linked at Asn-197. LRR repeat units lie at residues 199 to 220 and 223 to 245; these read SLER…CFHA and KLSG…LCLE. 4 N-linked (GlcNAc...) asparagine glycosylation sites follow: Asn-248, Asn-253, Asn-276, and Asn-292. 14 LRR repeats span residues 250–271, 276–297, 300–321, 324–345, 357–378, 381–401, 409–430, 433–455, 466–487, 508–529, 532–553, 564–585, 588–609, and 612–633; these read SIEN…TFSG, NLTT…SFAW, HLEY…SFYG, NLRH…TSLP, CLEY…TFTG, RLKF…TNET, PLLL…AFSW, HLEV…EWRG, YNKY…QRLM, NLVI…LLKG, KLEI…ANPG, HLRI…AFKD, ELKS…VFDN, and SLKS…VFGP. N-linked (GlcNAc...) asparagine glycosylation is found at Asn-399 and Asn-414. N-linked (GlcNAc...) asparagine glycosylation is found at Asn-637, Asn-663, and Asn-668. The 54-residue stretch at 646-699 folds into the LRRCT domain; it reads NPFDCTCESIAWFVNWINSTHTNISELSNHYLCNTPPQYHGFPVMLFDVSPCKD. 2 disulfides stabilise this stretch: Cys-650/Cys-678 and Cys-652/Cys-697. Residues 706–726 traverse the membrane as a helical segment; sequence LFMINTNILLIFIFIVLLIHF. Topologically, residues 727–904 are cytoplasmic; the sequence is EGWRISFYWN…VALGSRNSAH (178 aa). Positions 754-897 constitute a TIR domain; the sequence is FEYAAYIIHA…AFHHKLKVAL (144 aa). Position 759 is a phosphotyrosine (Tyr-759). Residues Lys-812 and Lys-831 each participate in a glycyl lysine isopeptide (Lys-Gly) (interchain with G-Cter in ubiquitin) cross-link. Tyr-858 is modified (phosphotyrosine).

It belongs to the Toll-like receptor family. Monomer and homodimer; dimerization is triggered by ligand-binding and is required for TLR3 signaling. Interacts (via transmembrane domain) with UNC93B1. Interacts with TICAM1 (via the TIR domain) in response to poly(I:C) and this interaction is enhanced the presence of WDFY1. Interacts with SRC; upon binding of double-stranded RNA. The tyrosine-phosphorylated form (via TIR domain) interacts with WDFY1 (via WD repeat 2) in response to poly(I:C). Ubiquitinated by TRIM3; leading to recognition and sorting of polyubiquitinated TLR3 by the ESCRT complexes. Ubiquitinated by ZNRF1 via 'Lys-63'-linked ubiquitin chains; leading to TLR3 lysosomal trafficking and degradation.

The protein localises to the endoplasmic reticulum membrane. It is found in the endosome membrane. Its subcellular location is the early endosome. Key component of innate and adaptive immunity. TLRs (Toll-like receptors) control host immune response against pathogens through recognition of molecular patterns specific to microorganisms. TLR3 is a nucleotide-sensing TLR which is activated by double-stranded RNA, a sign of viral infection. Acts via the adapter TRIF/TICAM1, leading to NF-kappa-B activation, cytokine secretion and the inflammatory response. This is Toll-like receptor 3 (TLR3) from Boselaphus tragocamelus (Nilgai).